A 1535-amino-acid polypeptide reads, in one-letter code: MADDHRQPEASSNTAANPYNHPVASEHTLGSLNTTSTSETDASADADARWGERNQGDPVSRRGAMEEFEEMRREVTKLSLHRTRSAKDARRRSRAEGRDEEKALEDEQASSTDEYRGGFDLNEFLMGGHLERRTTAGEPAKKVGVAFKNVTVKGVETGASFVRTLPDAVVGTFGPDLYKIICRFVPALHFGKRPPVRDLLHDFSGAVREGEMMLVLGRPGAGCSTFLKTIANDREAFAGVEGEVSYGGLSAEEQHKHFRGEVNYNQEDDQHFPNLTVWQTLKFSLINKTKKHDKASIPIIIDALLKMFGITHTKNTLVGNEYVRGVSGGERKRVSIAETLATKSSVVCWDNSTRGLDASTALDYAKSLRIMTDVSKRTTLVTLYQAGESIYELMDKVLVIDAGRMLYQGPANEAKQYFVDLGFYCPEQSTTADFLTSLCDPNARQFQPGREASTPKTAEELEAIFKQSEAYKQIWNEVCAYEKLLQDTNQEDTRRFQKTVAQSKSKTVSKKSPYTVSIVRQVAACVQREFWLLWGDKTSLYTKYFIIVSNGLIVSSLFYGESLDTSGAFSRGGALFFSILFLVLQLTELMPAVSGRGIVARHKDYAFYRPSAVAIARVVVDFPAIFCMVVPFTIIVYFMTGLDVEASKFFIYFLFVYTTTFCITSLYRMFAALSPTIDDAVRFAGIALNVLILFVGYVIPKQGLIDGSIWFGWLFYVNPLSYSYEAVLTNEFSNRVMSCAPSQLVPQGPGVDPRYQGCALTGSELGKADVAGSRYLQESFQFTRHHLWRNFGVVIAFTVLYLLVTVIAAEVLSFVGGGGGALVFKKSKRSTKLKAQNGKGNDEEQVQNTGDNAALSRGEAKSSSSGEAMQRLSASDRVFTWSNVEYTVPYGNGTRKLLNGVNGYAKPGLMIALMGASGAGKTTLLNTLAQRQKMGVVTGDMLVDGHPLGTEFQRGTGFCEQMDLHDNTATIREALEFSAILRQDRNTPRQEKLDYVDQIIDLLELEDIQDAIIGSLNVEQKKRVTIGVELAAKPSLLLFLDEPTSGLDSQAAFSIVRFLKKLSQAGQAILCTIHQPSSMLIQQFDMVLALNPGGNTFYFGPIGPEGRDVIKYFADRGVVCPPSKNVAEFILETAAKATKKDGRAIDWNEEWRNSEQNRRILDEIQQIREERSKIPIADKGVEYEFAAPTWTQTVLLTERLFRQYWRDPSYYYGKLFVSVIIGIFNGFTFWMLDNSISSMQNRMFSIFLIILIPPIVLNSIVPKFYINRALWEAREYPSRIYGWFAFCTANVVCEIPMAIVSALIYWLLWYYPVGFPTDSSSAGYVFLMSMLFFLFQASWGQWICAFAPSFTVISNVLPFFFVMVNLFNGIVRPYKDYPVFWKYWMYYVNPVTWWLRGVISSVFPSVDIECASKEATHFDPPPGSTCQQYAGNFVSNIAGVGYLVNPDATEDCQYCPFANGTEYMHTLNVHDGDKWRCFGIFLAFVIINWALVYFFIYTVRVRGWSFGMGYLFGGVGVMIEGVKKVFSKKSEKEQN.

The disordered stretch occupies residues 1–115 (MADDHRQPEA…DEQASSTDEY (115 aa)). An N-linked (GlcNAc...) asparagine glycan is attached at Asn-33. The segment covering 34–45 (TTSTSETDASAD) has biased composition (low complexity). The span at 46-76 (ADARWGERNQGDPVSRRGAMEEFEEMRREVT) shows a compositional bias: basic and acidic residues. Residues 79 to 93 (SLHRTRSAKDARRRS) are compositionally biased toward basic residues. Asn-149, Asn-274, Asn-287, and Asn-351 each carry an N-linked (GlcNAc...) asparagine glycan. An ABC transporter 1 domain is found at 185–427 (VPALHFGKRP…FVDLGFYCPE (243 aa)). The next 7 helical transmembrane spans lie at 540-560 (LYTK…LFYG), 573-593 (GALF…MPAV), 618-638 (VVVD…IVYF), 646-666 (ASKF…ITSL), 680-700 (AVRF…YVIP), 703-723 (GLID…LSYS), and 791-811 (FGVV…AAEV). Positions 834–868 (KAQNGKGNDEEQVQNTGDNAALSRGEAKSSSSGEA) are disordered. Residues 879–1117 (FTWSNVEYTV…DVIKYFADRG (239 aa)) enclose the ABC transporter 2 domain. The N-linked (GlcNAc...) asparagine glycan is linked to Asn-892. Residue 915 to 922 (GASGAGKT) participates in ATP binding. 6 helical membrane passes run 1212 to 1232 (YGKL…FWML), 1246 to 1266 (IFLI…KFYI), 1295 to 1315 (IPMA…PVGF), 1320 to 1340 (SSAG…ASWG), 1342 to 1362 (WICA…FFFV), and 1384 to 1406 (WMYY…FPSV). Residue Asn-1459 is glycosylated (N-linked (GlcNAc...) asparagine). Helical transmembrane passes span 1477–1497 (CFGI…FFIY) and 1503–1523 (GWSF…EGVK).

Belongs to the ABC transporter superfamily. ABCG family. PDR (TC 3.A.1.205) subfamily.

Its subcellular location is the cell membrane. The catalysed reaction is voriconazole(in) + ATP + H2O = voriconazole(out) + ADP + phosphate + H(+). Functionally, pleiotropic ABC efflux transporter involved in the basal level of azole susceptibility. Confers resistance to voriconazole. This Aspergillus flavus (strain ATCC 200026 / FGSC A1120 / IAM 13836 / NRRL 3357 / JCM 12722 / SRRC 167) protein is ABC multidrug transporter atrF.